Here is a 231-residue protein sequence, read N- to C-terminus: 5'-methylthioadenosine/S-adenosylhomocysteine nucleosidase (231 aa).

Glu12 acts as the Proton acceptor in catalysis. Substrate is bound by residues Gly78, Ile153, and 174–175; that span reads ME. Asp198 serves as the catalytic Proton donor.

The protein belongs to the PNP/UDP phosphorylase family. MtnN subfamily.

The enzyme catalyses S-adenosyl-L-homocysteine + H2O = S-(5-deoxy-D-ribos-5-yl)-L-homocysteine + adenine. The catalysed reaction is S-methyl-5'-thioadenosine + H2O = 5-(methylsulfanyl)-D-ribose + adenine. It catalyses the reaction 5'-deoxyadenosine + H2O = 5-deoxy-D-ribose + adenine. Its pathway is amino-acid biosynthesis; L-methionine biosynthesis via salvage pathway; S-methyl-5-thio-alpha-D-ribose 1-phosphate from S-methyl-5'-thioadenosine (hydrolase route): step 1/2. Functionally, catalyzes the irreversible cleavage of the glycosidic bond in both 5'-methylthioadenosine (MTA) and S-adenosylhomocysteine (SAH/AdoHcy) to adenine and the corresponding thioribose, 5'-methylthioribose and S-ribosylhomocysteine, respectively. Also cleaves 5'-deoxyadenosine, a toxic by-product of radical S-adenosylmethionine (SAM) enzymes, into 5-deoxyribose and adenine. The chain is 5'-methylthioadenosine/S-adenosylhomocysteine nucleosidase from Shewanella sp. (strain W3-18-1).